The sequence spans 238 residues: Bacterial microcompartment shell protein PduB (238 aa).

BMC circularly permuted domains follow at residues 14–125 (FVGA…VYNA) and 126–225 (KAGH…LSQF). Cys158 and Cys197 are disulfide-bonded.

Belongs to the EutL/PduB family. As to quaternary structure, homotrimerizes to form a pseudohexamer with a central pore 7.5 Angstroms wide and 22 Angstroms long; the pore channel in the crystal binds up to 4 glycerol molecules. A disulfide bond forms in the pore, it is not clear if this is an artifact. The trimers pack into an array.

The protein localises to the bacterial microcompartment. It participates in polyol metabolism; 1,2-propanediol degradation. One of the major shell proteins of the bacterial microcompartment (BMC) dedicated to 1,2-propanediol (1,2-PD) degradation. Probably involved in a propanediol fermentation/reuterin formation pathway. This is Bacterial microcompartment shell protein PduB from Limosilactobacillus reuteri (strain DSM 20016) (Lactobacillus reuteri).